The following is a 166-amino-acid chain: MAAPSGGFWTAVVLAAAALKLAAAVSEPTTVPFDVRPGGVVHSFSQDVGPGNKFTCTFTYASQGGTNEQWQMSLGTSEDSQHFTCTIWRPQGKSYLYFTQFKAELRGAEIEYAMAYSKAAFERESDVPLKSEEFEVTKTAVSHRPGAFKAELSKLVIVAKAARSEL.

The N-terminal stretch at 1–24 (MAAPSGGFWTAVVLAAAALKLAAA) is a signal peptide.

Belongs to the MYDGF family. As to expression, expressed in prostate, spleen and lung, and weakly expressed in the left ventricle (LF) and liver. Expressed predominantly in inflammatory cells, such as monocytes and macrophages, and weakly expressed in neutrophils, T-cells, B-cells, endothelial cells and cardiac myocytes, after myocardial infarction (MI) (at protein level).

It localises to the secreted. It is found in the endoplasmic reticulum-Golgi intermediate compartment. Its subcellular location is the endoplasmic reticulum. The protein localises to the golgi apparatus. Functionally, bone marrow-derived monocyte and paracrine-acting protein that promotes cardiac myocyte survival and adaptive angiogenesis for cardiac protection and/or repair after myocardial infarction (MI). Stimulates endothelial cell proliferation through a MAPK1/3-, STAT3- and CCND1-mediated signaling pathway. Inhibits cardiac myocyte apoptosis in a PI3K/AKT-dependent signaling pathway. In Mus musculus (Mouse), this protein is Myeloid-derived growth factor.